We begin with the raw amino-acid sequence, 136 residues long: General odorant-binding protein 57d (136 aa).

The signal sequence occupies residues 1–29; the sequence is MPEKMSLRLVPHLACIIFILEIQFRIADS. 3 cysteine pairs are disulfide-bonded: Cys33–Cys70, Cys66–Cys118, and Cys107–Cys127.

The protein belongs to the PBP/GOBP family.

Present in the aqueous fluid surrounding olfactory sensory dendrites and are thought to aid in the capture and transport of hydrophobic odorants into and through this fluid. In Drosophila melanogaster (Fruit fly), this protein is General odorant-binding protein 57d.